The sequence spans 375 residues: Acetylornithine aminotransferase (375 aa).

Pyridoxal 5'-phosphate is bound by residues 102–103 (GA) and F129. A N(2)-acetyl-L-ornithine-binding site is contributed by R132. 214–217 (DEVQ) contacts pyridoxal 5'-phosphate. At K243 the chain carries N6-(pyridoxal phosphate)lysine. S271 lines the N(2)-acetyl-L-ornithine pocket. T272 is a binding site for pyridoxal 5'-phosphate.

Belongs to the class-III pyridoxal-phosphate-dependent aminotransferase family. ArgD subfamily. In terms of assembly, homodimer. It depends on pyridoxal 5'-phosphate as a cofactor.

It localises to the cytoplasm. It catalyses the reaction N(2)-acetyl-L-ornithine + 2-oxoglutarate = N-acetyl-L-glutamate 5-semialdehyde + L-glutamate. It functions in the pathway amino-acid biosynthesis; L-arginine biosynthesis; N(2)-acetyl-L-ornithine from L-glutamate: step 4/4. The protein is Acetylornithine aminotransferase of Archaeoglobus fulgidus (strain ATCC 49558 / DSM 4304 / JCM 9628 / NBRC 100126 / VC-16).